The sequence spans 570 residues: Endo-1,4-beta-xylanase 5-like (570 aa).

The first 23 residues, 1 to 23 (MNSIKNGFFLCMIFLLWCHVDSG), serve as a signal peptide directing secretion. Residues N197, N261, and N307 are each glycosylated (N-linked (GlcNAc...) asparagine). The region spanning 202-501 (KGVVISLKQT…TQTGDVIDKL (300 aa)) is the GH10 domain. E332 functions as the Proton donor in the catalytic mechanism. N346 carries N-linked (GlcNAc...) asparagine glycosylation. E439 serves as the catalytic Nucleophile. N-linked (GlcNAc...) asparagine glycosylation is found at N490, N515, N537, and N545.

It belongs to the glycosyl hydrolase 10 (cellulase F) family.

The catalysed reaction is Endohydrolysis of (1-&gt;4)-beta-D-xylosidic linkages in xylans.. Its pathway is glycan degradation; xylan degradation. Binds to and hydrolyzes insoluble and soluble xylan substrates. This is Endo-1,4-beta-xylanase 5-like from Arabidopsis thaliana (Mouse-ear cress).